A 116-amino-acid polypeptide reads, in one-letter code: uncharacterized protein (116 aa).

This sequence belongs to the BolA/IbaG family.

The protein resides in the mitochondrion. This is an uncharacterized protein from Schizosaccharomyces pombe (strain 972 / ATCC 24843) (Fission yeast).